The chain runs to 550 residues: Arginine--tRNA ligase (550 aa).

The short motif at alanine 130–glycine 140 is the 'HIGH' region element.

Belongs to the class-I aminoacyl-tRNA synthetase family. In terms of assembly, monomer.

It localises to the cytoplasm. The catalysed reaction is tRNA(Arg) + L-arginine + ATP = L-arginyl-tRNA(Arg) + AMP + diphosphate. The polypeptide is Arginine--tRNA ligase (Mycolicibacterium gilvum (strain PYR-GCK) (Mycobacterium gilvum (strain PYR-GCK))).